The chain runs to 127 residues: Ribosome-binding factor A (127 aa).

The protein belongs to the RbfA family. Monomer. Binds 30S ribosomal subunits, but not 50S ribosomal subunits or 70S ribosomes.

The protein resides in the cytoplasm. Its function is as follows. One of several proteins that assist in the late maturation steps of the functional core of the 30S ribosomal subunit. Associates with free 30S ribosomal subunits (but not with 30S subunits that are part of 70S ribosomes or polysomes). Required for efficient processing of 16S rRNA. May interact with the 5'-terminal helix region of 16S rRNA. This Actinobacillus pleuropneumoniae serotype 7 (strain AP76) protein is Ribosome-binding factor A.